Reading from the N-terminus, the 445-residue chain is Dolichyl-diphosphooligosaccharide--protein glycosyltransferase 48 kDa subunit (445 aa).

Residues methionine 1–alanine 20 form the signal peptide. The Lumenal segment spans residues aspartate 21–proline 405. A helical membrane pass occupies residues tyrosine 406–tyrosine 426. The Cytoplasmic segment spans residues histidine 427–asparagine 445.

Belongs to the DDOST 48 kDa subunit family. Component of the oligosaccharyltransferase (OST) complex.

It localises to the endoplasmic reticulum membrane. Its pathway is protein modification; protein glycosylation. In terms of biological role, subunit of the oligosaccharyl transferase (OST) complex that catalyzes the initial transfer of a defined glycan (Glc(3)Man(9)GlcNAc(2) in eukaryotes) from the lipid carrier dolichol-pyrophosphate to an asparagine residue within an Asn-X-Ser/Thr consensus motif in nascent polypeptide chains, the first step in protein N-glycosylation. N-glycosylation occurs cotranslationally and the complex associates with the Sec61 complex at the channel-forming translocon complex that mediates protein translocation across the endoplasmic reticulum (ER). All subunits are required for a maximal enzyme activity. Required for the assembly of both SST3A- and SS3B-containing OST complexes. Required for normal lifespan. The sequence is that of Dolichyl-diphosphooligosaccharide--protein glycosyltransferase 48 kDa subunit from Caenorhabditis elegans.